A 64-amino-acid polypeptide reads, in one-letter code: RKCFNSPGRLVSKPCPEGNNLCYKMSNRMYPPGFNVRRGCAETCPRRNRLLEVVCCCDTDNCNK.

Intrachain disulfides connect C3-C22, C15-C40, C44-C56, and C57-C62.

It belongs to the three-finger toxin family. Short-chain subfamily. Orphan group XIII sub-subfamily. In terms of tissue distribution, expressed by the venom gland.

The protein localises to the secreted. This Aspidelaps scutatus (Shield-nose snake) protein is Cytotoxin homolog S4C8.